The primary structure comprises 634 residues: Chaperone protein HtpG (634 aa).

Residues 1–342 (MTVDTDKQTL…SADLSLNVSR (342 aa)) are a; substrate-binding. The interval 343 to 559 (EILQSGPVVD…QGDLGLQMRQ (217 aa)) is b. The interval 560–634 (LLEASGQAVP…LNKLLLELSA (75 aa)) is c.

This sequence belongs to the heat shock protein 90 family. As to quaternary structure, homodimer.

The protein localises to the cytoplasm. In terms of biological role, molecular chaperone. Has ATPase activity. The polypeptide is Chaperone protein HtpG (Xanthomonas campestris pv. campestris (strain ATCC 33913 / DSM 3586 / NCPPB 528 / LMG 568 / P 25)).